The sequence spans 386 residues: Protein MGF 360-4L (386 aa).

This sequence belongs to the asfivirus MGF 360 family.

Plays a role in virus cell tropism, and may be required for efficient virus replication in macrophages. In Ornithodoros (relapsing fever ticks), this protein is Protein MGF 360-4L.